Reading from the N-terminus, the 222-residue chain is MEIDIKKIANMFDHTRLAPDATLAEIEKLCNEAKQYGFFSVCVNPYFIEAAKKFLSGSNVLVCTVIGFPLGQNTIETKVFETKDCVAKGAHEIDMVINISKLKEGDVDYCVNEINEIKKACNGALLKVIVETCLLTPKEKELAAQIVLKSNADYIKTSTGFSTAGATFEDIEIFKKVVGNNKLIKAAGGIKTTDDLLKMISLGANRIGTSRGVELIEGLKNK.

The Proton donor/acceptor role is filled by aspartate 94. Lysine 156 acts as the Schiff-base intermediate with acetaldehyde in catalysis. Catalysis depends on lysine 185, which acts as the Proton donor/acceptor.

The protein belongs to the DeoC/FbaB aldolase family. DeoC type 1 subfamily.

Its subcellular location is the cytoplasm. It carries out the reaction 2-deoxy-D-ribose 5-phosphate = D-glyceraldehyde 3-phosphate + acetaldehyde. The protein operates within carbohydrate degradation; 2-deoxy-D-ribose 1-phosphate degradation; D-glyceraldehyde 3-phosphate and acetaldehyde from 2-deoxy-alpha-D-ribose 1-phosphate: step 2/2. Its function is as follows. Catalyzes a reversible aldol reaction between acetaldehyde and D-glyceraldehyde 3-phosphate to generate 2-deoxy-D-ribose 5-phosphate. In Malacoplasma penetrans (strain HF-2) (Mycoplasma penetrans), this protein is Deoxyribose-phosphate aldolase.